A 334-amino-acid chain; its full sequence is Glycerol-3-phosphate dehydrogenase [NAD(P)+] (334 aa).

Residues tryptophan 13, arginine 33, and lysine 106 each coordinate NADPH. Sn-glycerol 3-phosphate contacts are provided by lysine 106, glycine 137, and serine 139. Alanine 141 contacts NADPH. Positions 192, 245, 255, 256, and 257 each coordinate sn-glycerol 3-phosphate. The Proton acceptor role is filled by lysine 192. Arginine 256 contacts NADPH. Residues valine 280 and glutamate 282 each coordinate NADPH.

Belongs to the NAD-dependent glycerol-3-phosphate dehydrogenase family.

The protein resides in the cytoplasm. It catalyses the reaction sn-glycerol 3-phosphate + NAD(+) = dihydroxyacetone phosphate + NADH + H(+). It carries out the reaction sn-glycerol 3-phosphate + NADP(+) = dihydroxyacetone phosphate + NADPH + H(+). It functions in the pathway membrane lipid metabolism; glycerophospholipid metabolism. Catalyzes the reduction of the glycolytic intermediate dihydroxyacetone phosphate (DHAP) to sn-glycerol 3-phosphate (G3P), the key precursor for phospholipid synthesis. This Chlamydia felis (strain Fe/C-56) (Chlamydophila felis) protein is Glycerol-3-phosphate dehydrogenase [NAD(P)+].